The sequence spans 313 residues: 4-hydroxy-3-methylbut-2-enyl diphosphate reductase (313 aa).

Cys12 is a binding site for [4Fe-4S] cluster. His41 and His74 together coordinate (2E)-4-hydroxy-3-methylbut-2-enyl diphosphate. Positions 41 and 74 each coordinate dimethylallyl diphosphate. 2 residues coordinate isopentenyl diphosphate: His41 and His74. Cys96 provides a ligand contact to [4Fe-4S] cluster. His124 contributes to the (2E)-4-hydroxy-3-methylbut-2-enyl diphosphate binding site. His124 lines the dimethylallyl diphosphate pocket. His124 is a binding site for isopentenyl diphosphate. Glu126 functions as the Proton donor in the catalytic mechanism. Position 167 (Thr167) interacts with (2E)-4-hydroxy-3-methylbut-2-enyl diphosphate. Cys197 lines the [4Fe-4S] cluster pocket. (2E)-4-hydroxy-3-methylbut-2-enyl diphosphate is bound by residues Ser225, Ser226, Asn227, and Ser269. Residues Ser225, Ser226, Asn227, and Ser269 each coordinate dimethylallyl diphosphate. 4 residues coordinate isopentenyl diphosphate: Ser225, Ser226, Asn227, and Ser269.

This sequence belongs to the IspH family. Requires [4Fe-4S] cluster as cofactor.

The enzyme catalyses isopentenyl diphosphate + 2 oxidized [2Fe-2S]-[ferredoxin] + H2O = (2E)-4-hydroxy-3-methylbut-2-enyl diphosphate + 2 reduced [2Fe-2S]-[ferredoxin] + 2 H(+). The catalysed reaction is dimethylallyl diphosphate + 2 oxidized [2Fe-2S]-[ferredoxin] + H2O = (2E)-4-hydroxy-3-methylbut-2-enyl diphosphate + 2 reduced [2Fe-2S]-[ferredoxin] + 2 H(+). Its pathway is isoprenoid biosynthesis; dimethylallyl diphosphate biosynthesis; dimethylallyl diphosphate from (2E)-4-hydroxy-3-methylbutenyl diphosphate: step 1/1. It functions in the pathway isoprenoid biosynthesis; isopentenyl diphosphate biosynthesis via DXP pathway; isopentenyl diphosphate from 1-deoxy-D-xylulose 5-phosphate: step 6/6. Its function is as follows. Catalyzes the conversion of 1-hydroxy-2-methyl-2-(E)-butenyl 4-diphosphate (HMBPP) into a mixture of isopentenyl diphosphate (IPP) and dimethylallyl diphosphate (DMAPP). Acts in the terminal step of the DOXP/MEP pathway for isoprenoid precursor biosynthesis. This chain is 4-hydroxy-3-methylbut-2-enyl diphosphate reductase, found in Baumannia cicadellinicola subsp. Homalodisca coagulata.